The primary structure comprises 37 residues: uncharacterized protein (37 aa).

A helical membrane pass occupies residues 13–33 (TFLTIIVLLMIVFGIAIVALL).

It is found in the host membrane. This is an uncharacterized protein from Acidianus convivator (ABV).